The sequence spans 143 residues: Ribonuclease H (143 aa).

The 136-residue stretch at 1-136 (MQEIEIFCDG…CDSLAKLEAQ (136 aa)) folds into the RNase H type-1 domain. Residues D9, E47, D69, and D128 each coordinate Mg(2+).

The protein belongs to the RNase H family. Monomer. The cofactor is Mg(2+).

It localises to the cytoplasm. It catalyses the reaction Endonucleolytic cleavage to 5'-phosphomonoester.. Functionally, endonuclease that specifically degrades the RNA of RNA-DNA hybrids. In Helicobacter acinonychis (strain Sheeba), this protein is Ribonuclease H.